The primary structure comprises 162 residues: Protein cornichon homolog 2 (162 aa).

The Cytoplasmic segment spans residues 1–10 (MAFTFAAFCY). Residues 11–31 (MLTLVLCASLIFFIIWHIIAF) traverse the membrane as a helical segment. The Lumenal segment spans residues 32–72 (DELRTDFKNPIEQGNPSRARERVKNVERICCLLRKLVVPEY). A helical transmembrane segment spans residues 73–93 (CIHGLFCLMFMCAAEWVTLGL). Residues 94-138 (NIPLLFYHLWRYFHRPADGSEVMFDPVSIMNVDILNYCQKEAWCK) are Cytoplasmic-facing. A helical membrane pass occupies residues 139-161 (LAFYLLSFFYYLYRVGATVRYVS). Residue Ala162 is a topological domain, lumenal.

It belongs to the cornichon family.

It localises to the membrane. Its function is as follows. Regulates the trafficking and gating properties of AMPA-selective glutamate receptors (AMPARs). This is Protein cornichon homolog 2 (cnih2) from Xenopus tropicalis (Western clawed frog).